A 393-amino-acid chain; its full sequence is Acetyl-CoA acetyltransferase (393 aa).

Catalysis depends on Cys88, which acts as the Acyl-thioester intermediate. Residues His349 and Cys379 each act as proton acceptor in the active site.

It belongs to the thiolase-like superfamily. Thiolase family. As to quaternary structure, homotetramer.

It localises to the cytoplasm. It carries out the reaction 2 acetyl-CoA = acetoacetyl-CoA + CoA. It functions in the pathway biopolymer metabolism; poly-(R)-3-hydroxybutanoate biosynthesis. The condensation reaction is inhibited by free CoA. The cleavage reaction is characterized by substrate inhibition by acetoacetyl-CoA, which is partially relieved by free CoA. Catalyzes the condensation of two acetyl-coA units to form acetoacetyl-CoA. Is involved in the biosynthesis of polyhydroxybutyrate (PHB), which is accumulated as an intracellular energy reserve material when cells grow under conditions of nutrient limitation. Also catalyzes the reverse reaction, i.e. the cleavage of acetoacetyl-CoA, and is therefore also involved in the reutilization of PHB. The polypeptide is Acetyl-CoA acetyltransferase (Cupriavidus necator (strain ATCC 17699 / DSM 428 / KCTC 22496 / NCIMB 10442 / H16 / Stanier 337) (Ralstonia eutropha)).